Here is a 225-residue protein sequence, read N- to C-terminus: Large ribosomal subunit protein eL15 (225 aa).

Positions 159–180 (RPFRGLTSAGKKMRGLRKSRGL) are disordered. Basic residues predominate over residues 169–180 (KKMRGLRKSRGL).

The protein belongs to the eukaryotic ribosomal protein eL15 family.

This Aeropyrum pernix (strain ATCC 700893 / DSM 11879 / JCM 9820 / NBRC 100138 / K1) protein is Large ribosomal subunit protein eL15 (rpl15e).